A 158-amino-acid polypeptide reads, in one-letter code: Crossover junction endodeoxyribonuclease RuvC (158 aa).

Catalysis depends on residues aspartate 7, glutamate 66, and aspartate 139. Mg(2+) contacts are provided by aspartate 7, glutamate 66, and aspartate 139.

Belongs to the RuvC family. In terms of assembly, homodimer which binds Holliday junction (HJ) DNA. The HJ becomes 2-fold symmetrical on binding to RuvC with unstacked arms; it has a different conformation from HJ DNA in complex with RuvA. In the full resolvosome a probable DNA-RuvA(4)-RuvB(12)-RuvC(2) complex forms which resolves the HJ. It depends on Mg(2+) as a cofactor.

The protein localises to the cytoplasm. The catalysed reaction is Endonucleolytic cleavage at a junction such as a reciprocal single-stranded crossover between two homologous DNA duplexes (Holliday junction).. The RuvA-RuvB-RuvC complex processes Holliday junction (HJ) DNA during genetic recombination and DNA repair. Endonuclease that resolves HJ intermediates. Cleaves cruciform DNA by making single-stranded nicks across the HJ at symmetrical positions within the homologous arms, yielding a 5'-phosphate and a 3'-hydroxyl group; requires a central core of homology in the junction. The consensus cleavage sequence is 5'-(A/T)TT(C/G)-3'. Cleavage occurs on the 3'-side of the TT dinucleotide at the point of strand exchange. HJ branch migration catalyzed by RuvA-RuvB allows RuvC to scan DNA until it finds its consensus sequence, where it cleaves and resolves the cruciform DNA. In Campylobacter hominis (strain ATCC BAA-381 / DSM 21671 / CCUG 45161 / LMG 19568 / NCTC 13146 / CH001A), this protein is Crossover junction endodeoxyribonuclease RuvC.